Reading from the N-terminus, the 381-residue chain is Guanine nucleotide-binding protein G(s) subunit alpha (381 aa).

A lipid anchor (S-palmitoyl cysteine) is attached at cysteine 3. A G-alpha domain is found at alanine 36–leucine 381. The segment at arginine 39 to threonine 52 is G1 motif. GTP contacts are provided by residues glycine 44–serine 51, leucine 183–threonine 189, glycine 208–glutamine 212, asparagine 277–aspartate 280, and alanine 353. Serine 51 and threonine 189 together coordinate Mg(2+). Residues aspartate 181–threonine 189 form a G2 motif region. The interval phenylalanine 204–arginine 213 is G3 motif. The tract at residues isoleucine 273–aspartate 280 is G4 motif. The segment at threonine 351 to threonine 356 is G5 motif.

Belongs to the G-alpha family. G(s) subfamily. G proteins are composed of 3 units; alpha, beta and gamma. The alpha chain contains the guanine nucleotide binding site.

In terms of biological role, guanine nucleotide-binding proteins (G proteins) are involved as modulators or transducers in various transmembrane signaling systems. The G(s) protein is involved in hormonal regulation of adenylate cyclase: it activates the cyclase in response to beta-adrenergic stimuli. The sequence is that of Guanine nucleotide-binding protein G(s) subunit alpha from Geodia cydonium (Sponge).